The sequence spans 157 residues: Ribosome maturation factor RimP (157 aa).

Belongs to the RimP family.

The protein localises to the cytoplasm. In terms of biological role, required for maturation of 30S ribosomal subunits. The chain is Ribosome maturation factor RimP from Petrotoga mobilis (strain DSM 10674 / SJ95).